A 57-amino-acid polypeptide reads, in one-letter code: DNA gyrase inhibitor YacG (57 aa).

The Zn(2+) site is built by Cys-10, Cys-13, Cys-25, and Cys-29.

This sequence belongs to the DNA gyrase inhibitor YacG family. In terms of assembly, interacts with GyrB. Requires Zn(2+) as cofactor.

In terms of biological role, inhibits all the catalytic activities of DNA gyrase by preventing its interaction with DNA. Acts by binding directly to the C-terminal domain of GyrB, which probably disrupts DNA binding by the gyrase. This Brucella melitensis biotype 1 (strain ATCC 23456 / CCUG 17765 / NCTC 10094 / 16M) protein is DNA gyrase inhibitor YacG.